The primary structure comprises 412 residues: Peptidase T (412 aa).

Position 79 (H79) interacts with Zn(2+). D81 is a catalytic residue. Residue D142 participates in Zn(2+) binding. E176 functions as the Proton acceptor in the catalytic mechanism. Zn(2+)-binding residues include E177, D199, and H381.

It belongs to the peptidase M20B family. Zn(2+) serves as cofactor.

The protein localises to the cytoplasm. It carries out the reaction Release of the N-terminal residue from a tripeptide.. Its function is as follows. Cleaves the N-terminal amino acid of tripeptides. The protein is Peptidase T of Exiguobacterium sp. (strain ATCC BAA-1283 / AT1b).